Consider the following 93-residue polypeptide: Pyrimidine/purine nucleoside phosphorylase (93 aa).

Belongs to the nucleoside phosphorylase PpnP family.

The enzyme catalyses a purine D-ribonucleoside + phosphate = a purine nucleobase + alpha-D-ribose 1-phosphate. It catalyses the reaction adenosine + phosphate = alpha-D-ribose 1-phosphate + adenine. It carries out the reaction cytidine + phosphate = cytosine + alpha-D-ribose 1-phosphate. The catalysed reaction is guanosine + phosphate = alpha-D-ribose 1-phosphate + guanine. The enzyme catalyses inosine + phosphate = alpha-D-ribose 1-phosphate + hypoxanthine. It catalyses the reaction thymidine + phosphate = 2-deoxy-alpha-D-ribose 1-phosphate + thymine. It carries out the reaction uridine + phosphate = alpha-D-ribose 1-phosphate + uracil. The catalysed reaction is xanthosine + phosphate = alpha-D-ribose 1-phosphate + xanthine. Catalyzes the phosphorolysis of diverse nucleosides, yielding D-ribose 1-phosphate and the respective free bases. Can use uridine, adenosine, guanosine, cytidine, thymidine, inosine and xanthosine as substrates. Also catalyzes the reverse reactions. The protein is Pyrimidine/purine nucleoside phosphorylase of Hahella chejuensis (strain KCTC 2396).